Reading from the N-terminus, the 362-residue chain is Heat-inducible transcription repressor HrcA (362 aa).

The protein belongs to the HrcA family.

Negative regulator of class I heat shock genes (grpE-dnaK-dnaJ and groELS operons). Prevents heat-shock induction of these operons. The polypeptide is Heat-inducible transcription repressor HrcA (Rhodopseudomonas palustris (strain ATCC BAA-98 / CGA009)).